A 296-amino-acid chain; its full sequence is NAD kinase (296 aa).

The active-site Proton acceptor is Asp72. NAD(+) is bound by residues 72–73, 146–147, Arg157, Lys174, Asp176, 187–192, and Gln247; these read DG, ND, and TAYALS.

It belongs to the NAD kinase family. A divalent metal cation serves as cofactor.

Its subcellular location is the cytoplasm. The catalysed reaction is NAD(+) + ATP = ADP + NADP(+) + H(+). In terms of biological role, involved in the regulation of the intracellular balance of NAD and NADP, and is a key enzyme in the biosynthesis of NADP. Catalyzes specifically the phosphorylation on 2'-hydroxyl of the adenosine moiety of NAD to yield NADP. This Pseudomonas entomophila (strain L48) protein is NAD kinase.